Reading from the N-terminus, the 888-residue chain is Alanine--tRNA ligase (888 aa).

4 residues coordinate Zn(2+): His-571, His-575, Cys-674, and His-678.

Belongs to the class-II aminoacyl-tRNA synthetase family. It depends on Zn(2+) as a cofactor.

The protein resides in the cytoplasm. The enzyme catalyses tRNA(Ala) + L-alanine + ATP = L-alanyl-tRNA(Ala) + AMP + diphosphate. Catalyzes the attachment of alanine to tRNA(Ala) in a two-step reaction: alanine is first activated by ATP to form Ala-AMP and then transferred to the acceptor end of tRNA(Ala). Also edits incorrectly charged Ser-tRNA(Ala) and Gly-tRNA(Ala) via its editing domain. The sequence is that of Alanine--tRNA ligase from Nocardia farcinica (strain IFM 10152).